A 220-amino-acid polypeptide reads, in one-letter code: 7-cyano-7-deazaguanine synthase (220 aa).

11–21 is an ATP binding site; the sequence is VSGGMDSVTLM. 4 residues coordinate Zn(2+): cysteine 186, cysteine 194, cysteine 197, and cysteine 200.

This sequence belongs to the QueC family. The cofactor is Zn(2+).

It carries out the reaction 7-carboxy-7-deazaguanine + NH4(+) + ATP = 7-cyano-7-deazaguanine + ADP + phosphate + H2O + H(+). It participates in purine metabolism; 7-cyano-7-deazaguanine biosynthesis. Catalyzes the ATP-dependent conversion of 7-carboxy-7-deazaguanine (CDG) to 7-cyano-7-deazaguanine (preQ(0)). The sequence is that of 7-cyano-7-deazaguanine synthase from Porphyromonas gingivalis (strain ATCC 33277 / DSM 20709 / CIP 103683 / JCM 12257 / NCTC 11834 / 2561).